The following is a 274-amino-acid chain: MRFAKGHGTENDFVILPDPDGELDLDAATVAALCDRRAGLGADGVLRVVRTKALDEPLTGEAATAQRCEWFMDYRNADGSVAEMCGNGVRVFARYLQEAGLVGAAAFEVGTRAGARHVVLEPDGNITVDMGPVRILGPGSARLADGPVHGTRISVGNPHLACRVARPVAEVDLSAPPLLRAEEFPQGANVEVFREVASGVLEMRVYERGAAETRSCGTGIVAAAAAATPPGEDARWTVRVPGGECTVVLESGAARLSGPAVIVAEGDVRLSALR.

The substrate site is built by asparagine 11 and asparagine 76. Catalysis depends on cysteine 85, which acts as the Proton donor. Substrate is bound by residues 86 to 87, asparagine 157, asparagine 189, and 207 to 208; these read GN and ER. Residue cysteine 216 is the Proton acceptor of the active site. Position 217–218 (217–218) interacts with substrate; the sequence is GT.

Belongs to the diaminopimelate epimerase family. In terms of assembly, homodimer.

It is found in the cytoplasm. It carries out the reaction (2S,6S)-2,6-diaminopimelate = meso-2,6-diaminopimelate. It participates in amino-acid biosynthesis; L-lysine biosynthesis via DAP pathway; DL-2,6-diaminopimelate from LL-2,6-diaminopimelate: step 1/1. Catalyzes the stereoinversion of LL-2,6-diaminopimelate (L,L-DAP) to meso-diaminopimelate (meso-DAP), a precursor of L-lysine and an essential component of the bacterial peptidoglycan. The sequence is that of Diaminopimelate epimerase from Thermobifida fusca (strain YX).